Consider the following 259-residue polypeptide: 12alpha-hydroxysteroid dehydrogenase (259 aa).

Tyr162 acts as the Proton acceptor in catalysis.

This sequence belongs to the short-chain dehydrogenases/reductases (SDR) family. In terms of assembly, homotetramer.

It catalyses the reaction cholate + NADP(+) = 3alpha,7alpha-dihydroxy-12-oxo-5beta-cholanate + NADPH + H(+). It carries out the reaction deoxycholate + NADP(+) = 12-dehydrodeoxycholate + NADPH + H(+). Catalyzes the oxidation of the 12alpha-hydroxy group of bile acids, like cholate and deoxycholate. Is also able to catalyze the reverse reaction in vitro. Is likely involved in an epimerization pathway of bile acids that converts hydroxy groups from alpha to beta positions via stable oxo-intermediates, which occurs in the human gut. The sequence is that of 12alpha-hydroxysteroid dehydrogenase from Clostridium sp. (strain ATCC 29733 / VPI C48-50).